The primary structure comprises 504 residues: Cytochrome P450 2K4 (504 aa).

Position 447 (Cys447) interacts with heme.

Belongs to the cytochrome P450 family. Requires heme as cofactor.

It is found in the endoplasmic reticulum membrane. It localises to the microsome membrane. It catalyses the reaction an organic molecule + reduced [NADPH--hemoprotein reductase] + O2 = an alcohol + oxidized [NADPH--hemoprotein reductase] + H2O + H(+). The polypeptide is Cytochrome P450 2K4 (cyp2k4) (Oncorhynchus mykiss (Rainbow trout)).